The sequence spans 599 residues: Putative sensor histidine kinase NtrY-like (599 aa).

Transmembrane regions (helical) follow at residues 17-37 (VLIFTLATAAIIFACATFYVI), 44-64 (FSTIIGFLLVDLAIFLILGVV), 85-105 (IVIAFSLVAAIPTIIVSVFSV), and 285-305 (IMFIFIALLLLFVAISFGVIF). The region spanning 307-361 (AKIVKPIKKLVTATDNVKDGDLTVQVPENEVDKDEIGTLYVAFNRMIKQLSRQQR) is the HAMP domain. The Histidine kinase domain maps to 378–589 (KVAHEIKNPL…IIDIKFDLKE (212 aa)). At histidine 381 the chain carries Phosphohistidine; by autocatalysis.

The protein localises to the cell membrane. The enzyme catalyses ATP + protein L-histidine = ADP + protein N-phospho-L-histidine.. Its function is as follows. Member of the two-component regulatory system RC0948/RC0849. In Rickettsia conorii (strain ATCC VR-613 / Malish 7), this protein is Putative sensor histidine kinase NtrY-like.